A 231-amino-acid chain; its full sequence is NADH-ubiquinone oxidoreductase chain 4 (231 aa).

Helical transmembrane passes span 1-21 (PIAGSMVLAAILLKLGGYGII), 34-54 (MFLPFVVLALWGAILANLTCL), 61-80 (SLIAYSSVSHMGLVVAAIII), 85-107 (GLAGAMTLMIAHGFTSSALFCLA), 128-148 (ILPMATTWWLLTNLMNIAIPP), and 169-189 (TIILLGLSMLITASYSLHMFL).

This sequence belongs to the complex I subunit 4 family.

It localises to the mitochondrion membrane. The enzyme catalyses a ubiquinone + NADH + 5 H(+)(in) = a ubiquinol + NAD(+) + 4 H(+)(out). In terms of biological role, core subunit of the mitochondrial membrane respiratory chain NADH dehydrogenase (Complex I) that is believed to belong to the minimal assembly required for catalysis. Complex I functions in the transfer of electrons from NADH to the respiratory chain. The immediate electron acceptor for the enzyme is believed to be ubiquinone. The chain is NADH-ubiquinone oxidoreductase chain 4 (MT-ND4) from Gloydius blomhoffii (Mamushi).